The sequence spans 445 residues: Putative serpin-Z5 (445 aa).

The segment at Gly-356–Pro-380 is RCL.

Belongs to the serpin family.

Its function is as follows. Probable serine protease inhibitor. This chain is Putative serpin-Z5, found in Oryza sativa subsp. japonica (Rice).